The sequence spans 127 residues: Protein ApaG (127 aa).

Residues 3-127 (ESEKYRIEVE…FMLAMPRVLH (125 aa)) form the ApaG domain.

The chain is Protein ApaG from Aromatoleum aromaticum (strain DSM 19018 / LMG 30748 / EbN1) (Azoarcus sp. (strain EbN1)).